Here is a 178-residue protein sequence, read N- to C-terminus: ATP synthase subunit delta (178 aa).

This sequence belongs to the ATPase delta chain family. F-type ATPases have 2 components, F(1) - the catalytic core - and F(0) - the membrane proton channel. F(1) has five subunits: alpha(3), beta(3), gamma(1), delta(1), epsilon(1). F(0) has three main subunits: a(1), b(2) and c(10-14). The alpha and beta chains form an alternating ring which encloses part of the gamma chain. F(1) is attached to F(0) by a central stalk formed by the gamma and epsilon chains, while a peripheral stalk is formed by the delta and b chains.

It is found in the cell inner membrane. F(1)F(0) ATP synthase produces ATP from ADP in the presence of a proton or sodium gradient. F-type ATPases consist of two structural domains, F(1) containing the extramembraneous catalytic core and F(0) containing the membrane proton channel, linked together by a central stalk and a peripheral stalk. During catalysis, ATP synthesis in the catalytic domain of F(1) is coupled via a rotary mechanism of the central stalk subunits to proton translocation. Its function is as follows. This protein is part of the stalk that links CF(0) to CF(1). It either transmits conformational changes from CF(0) to CF(1) or is implicated in proton conduction. This is ATP synthase subunit delta from Ectopseudomonas mendocina (strain ymp) (Pseudomonas mendocina).